Reading from the N-terminus, the 583-residue chain is Threonine--tRNA ligase (583 aa).

The segment at 185 to 478 is catalytic; that stretch reads DHRKLGRELD…LVEHYGGAFP (294 aa). The Zn(2+) site is built by Cys278, His329, and His455.

Belongs to the class-II aminoacyl-tRNA synthetase family. As to quaternary structure, homodimer. Requires Zn(2+) as cofactor.

It localises to the cytoplasm. The catalysed reaction is tRNA(Thr) + L-threonine + ATP = L-threonyl-tRNA(Thr) + AMP + diphosphate + H(+). Its function is as follows. Catalyzes the attachment of threonine to tRNA(Thr) in a two-step reaction: L-threonine is first activated by ATP to form Thr-AMP and then transferred to the acceptor end of tRNA(Thr). Also edits incorrectly charged L-seryl-tRNA(Thr). The protein is Threonine--tRNA ligase of Borrelia hermsii (strain HS1 / DAH).